Here is a 251-residue protein sequence, read N- to C-terminus: Triosephosphate isomerase (251 aa).

9–11 (NWK) contacts substrate. The Electrophile role is filled by H95. Residue E167 is the Proton acceptor of the active site. Substrate-binding positions include G173, S213, and 234-235 (GG).

The protein belongs to the triosephosphate isomerase family. As to quaternary structure, homodimer.

Its subcellular location is the cytoplasm. The catalysed reaction is D-glyceraldehyde 3-phosphate = dihydroxyacetone phosphate. Its pathway is carbohydrate biosynthesis; gluconeogenesis. It functions in the pathway carbohydrate degradation; glycolysis; D-glyceraldehyde 3-phosphate from glycerone phosphate: step 1/1. Functionally, involved in the gluconeogenesis. Catalyzes stereospecifically the conversion of dihydroxyacetone phosphate (DHAP) to D-glyceraldehyde-3-phosphate (G3P). This is Triosephosphate isomerase from Trichlorobacter lovleyi (strain ATCC BAA-1151 / DSM 17278 / SZ) (Geobacter lovleyi).